Here is a 315-residue protein sequence, read N- to C-terminus: Olfactory receptor 10H2 (315 aa).

Residues 1–25 (MLGLNHTSMSEFILVGFSAFPHLQL) are Extracellular-facing. N-linked (GlcNAc...) asparagine glycosylation occurs at Asn-5. The helical transmembrane segment at 26–46 (MLFLLFLLMYLFTLLGNLLIM) threads the bilayer. Residues 47–54 (ATVWSERS) are Cytoplasmic-facing. The chain crosses the membrane as a helical span at residues 55–75 (LHTPMYLFLCVLSVSEILYTV). Residues 76–99 (AIIPRMLADLLSTQRSIAFLACAS) lie on the Extracellular side of the membrane. Residues Cys-97 and Cys-189 are joined by a disulfide bond. A helical transmembrane segment spans residues 100–120 (QMFFSFSFGFTHSFLLTVMGY). The Cytoplasmic segment spans residues 121-139 (DRYVAICHPLRYNVLMSPR). Residues 140-160 (GCACLVGCSWAGGSVMGMVVT) traverse the membrane as a helical segment. Residues 161–197 (SAIFQLTFCGSHEIQHFLCHVPPLLKLACGNNVPAVA) lie on the Extracellular side of the membrane. A helical membrane pass occupies residues 198–218 (LGVGLVCIMALLGCFLLILLS). The Cytoplasmic segment spans residues 219–238 (YAFIVADILKIPSAEGRNKA). The helical transmembrane segment at 239–259 (FSTCASHLIVVIVHYGFASVI) threads the bilayer. Residues 260–272 (YLKPKGPHSQEGD) lie on the Extracellular side of the membrane. A helical membrane pass occupies residues 273 to 293 (TLMATTYAVLTPFLSPIIFSL). The Cytoplasmic segment spans residues 294 to 315 (RNKELKVAMKRTFLSTLYSSGT).

Belongs to the G-protein coupled receptor 1 family.

Its subcellular location is the cell membrane. Its function is as follows. Odorant receptor. This Homo sapiens (Human) protein is Olfactory receptor 10H2 (OR10H2).